The sequence spans 196 residues: MMDNMQTEAQPTRTRILNAAREIFSENGFHSASMKAICKSCAISPGTLYHHFISKEALIQAIILQDQERALARFREPIEGIHFVDYMVESIVSLTHEAFGQRALVVEIMAEGMRNPQVAAMLKNKHMTITEFVAQRMRDAQQKGEISPDINTAMTSRLLLDLTYGVLADIEAEDLAREASFAQGLRAMIGGILTAS.

In terms of domain architecture, HTH tetR-type spans 10–70 (QPTRTRILNA…AIILQDQERA (61 aa)). Residues 33-52 (SMKAICKSCAISPGTLYHHF) constitute a DNA-binding region (H-T-H motif).

In terms of biological role, repressor for the uidRABC (gusRABC) operon. The protein is HTH-type transcriptional regulator UidR (uidR) of Escherichia coli O157:H7.